Reading from the N-terminus, the 317-residue chain is UV DNA damage endonuclease (317 aa).

This sequence belongs to the uve1/UvsE family.

In terms of biological role, component in a DNA repair pathway. Removal of UV LIGHT damaged nucleotides. Recognizes pyrimidine dimers and cleave a phosphodiester bond immediately 5' to the lesion. The protein is UV DNA damage endonuclease of Bacillus cereus (strain Q1).